The following is a 234-amino-acid chain: Sugar fermentation stimulation protein A (234 aa).

The segment at residues 201-220 is a DNA-binding region (H-T-H motif); the sequence is LLSEAQQRGVEILAYKAEIS.

Belongs to the SfsA family.

Functionally, binds to DNA non-specifically. Could be a regulatory factor involved in maltose metabolism. The sequence is that of Sugar fermentation stimulation protein A from Shigella sonnei (strain Ss046).